Consider the following 322-residue polypeptide: Undecaprenyl-phosphate 4-deoxy-4-formamido-L-arabinose transferase (322 aa).

Residues 1–235 (MFEIHPVKKV…TCLTTTPLRM (235 aa)) lie on the Cytoplasmic side of the membrane. The chain crosses the membrane as a helical span at residues 236–256 (LSLLGSIIAIGGFSIAVLLVI). The Periplasmic portion of the chain corresponds to 257 to 269 (LRLTFGPQWAAEG). Residues 270–290 (VFMLFAVLFTFIGAQFIGMGL) form a helical membrane-spanning segment. Topologically, residues 291–322 (LGEYIGRIYTDVRARPRYFVQQVIRPSSKENE) are cytoplasmic.

It belongs to the glycosyltransferase 2 family.

It is found in the cell inner membrane. It catalyses the reaction UDP-4-deoxy-4-formamido-beta-L-arabinose + di-trans,octa-cis-undecaprenyl phosphate = 4-deoxy-4-formamido-alpha-L-arabinopyranosyl di-trans,octa-cis-undecaprenyl phosphate + UDP. Its pathway is glycolipid biosynthesis; 4-amino-4-deoxy-alpha-L-arabinose undecaprenyl phosphate biosynthesis; 4-amino-4-deoxy-alpha-L-arabinose undecaprenyl phosphate from UDP-4-deoxy-4-formamido-beta-L-arabinose and undecaprenyl phosphate: step 1/2. The protein operates within bacterial outer membrane biogenesis; lipopolysaccharide biosynthesis. Catalyzes the transfer of 4-deoxy-4-formamido-L-arabinose from UDP to undecaprenyl phosphate. The modified arabinose is attached to lipid A and is required for resistance to polymyxin and cationic antimicrobial peptides. The protein is Undecaprenyl-phosphate 4-deoxy-4-formamido-L-arabinose transferase of Shigella sonnei (strain Ss046).